Consider the following 92-residue polypeptide: C-C motif chemokine 4 (92 aa).

An N-terminal signal peptide occupies residues 1–23 (MKLCVTVLSLLVLMAAFCSPALS). Disulfide bonds link Cys-34/Cys-58 and Cys-35/Cys-74.

Belongs to the intercrine beta (chemokine CC) family. In terms of assembly, homodimer. Interacts with CCR5.

It localises to the secreted. Functionally, monokine with inflammatory and chemokinetic properties. The chain is C-C motif chemokine 4 (CCL4) from Bos taurus (Bovine).